The following is a 607-amino-acid chain: Fatty acid amide hydrolase (607 aa).

Residues Lys-205 and Ser-281 each act as charge relay system in the active site. 302-305 (GGGS) provides a ligand contact to substrate. Ser-305 functions as the Acyl-ester intermediate in the catalytic mechanism.

This sequence belongs to the amidase family. Forms homodimers. In terms of tissue distribution, expressed in roots, leaves and flowers. Expressed in seedlings, flowers, roots, siliques, seeds and leaves.

It localises to the endoplasmic reticulum membrane. The protein localises to the cell membrane. The catalysed reaction is N-(5Z,8Z,11Z,14Z-eicosatetraenoyl)-ethanolamine + H2O = ethanolamine + (5Z,8Z,11Z,14Z)-eicosatetraenoate. It catalyses the reaction N-(9Z,12Z-octadecadienoyl)-ethanolamine + H2O = ethanolamine + (9Z,12Z)-octadecadienoate. It carries out the reaction N-hexadecanoylethanolamine + H2O = ethanolamine + hexadecanoate. The enzyme catalyses N-tetradecanoylethanolamine + H2O = tetradecanoate + ethanolamine. The catalysed reaction is N-dodecanoylethanolamine + H2O = dodecanoate + ethanolamine. Inhibited by methyl arachidonyl fluorophosphonate (MAFP). In terms of biological role, catalyzes the hydrolysis of bioactive endogenous fatty acid amides to their corresponding acids. The hydrolysis of endogenous amidated lipids terminates their participation as lipid mediators in various signaling systems. Converts a wide range of N-acylethanolamines (NAEs) to their corresponding free fatty acids and ethanolamine. Can use oleamide as substrate, but not indole-3-acetamide, 1-naphtalene-acetamide, nicotinic acid amide or L-asparagine. Can use 2-arachidonylglycerol as substrate. Participates in the regulation of plant growth. Hydrolyzes N-dodecanoylethanolamine, which is has a growth inhibitory effect on seedling growth. Involved in plant defense signaling. Involved in abscisic acid (ABA) signaling through mechanisms that are independent of the catalytic activity. Involved in the regulation of flowering time. Catalyzes the hydrolysis of N-acyl L-homoserine lactones (AHLs), which are a class of signaling molecules produced by bacteria for quorum sensing. Accumulation of L-homoserine appears to encourage plant growth at low concentrations by stimulating transpiration, but higher concentrations inhibit growth by stimulating ethylene production. This chain is Fatty acid amide hydrolase, found in Arabidopsis thaliana (Mouse-ear cress).